Reading from the N-terminus, the 209-residue chain is Ribonuclease HII (209 aa).

Positions 18 to 209 (GLVAGVDEVG…FKPVKALLER (192 aa)) constitute an RNase H type-2 domain. Positions 24, 25, and 116 each coordinate a divalent metal cation.

This sequence belongs to the RNase HII family. Mn(2+) serves as cofactor. The cofactor is Mg(2+).

It is found in the cytoplasm. The catalysed reaction is Endonucleolytic cleavage to 5'-phosphomonoester.. Functionally, endonuclease that specifically degrades the RNA of RNA-DNA hybrids. The protein is Ribonuclease HII of Shewanella sp. (strain ANA-3).